The primary structure comprises 684 residues: MRALNSRLVLIDINSSWQASRRLISATATAFSSDSSSSFRRTRGARQRIASSKSPASSPSPVRRPSDGFSFDVRSPSSDSSISSRKSPTTAPPTVELDAFLEILPPATRKELVKHEAIEELIEVVMDLGRKPLARFPSGDWVISEQPVTHQDLELAVSKVGDFSDDNRSGIDRSLHRISAIRNRKLQVIGLTCRVGRVVSGSAEIIRDLIEGGGSILVIGSPGVGKTTLIREIARMLADEHRKRVVIVDTSNEIGGDGDVPHSGIGRARRMQVPNVNLQHDVMIEAVENHMPETIIIDEIGTELEALAASTIAQRGVQLVATAHGMTIDNIIKNPSLQILIGGIESVTLGDEEARKRKVQKTILERKGPPTFTCAVEMISRTECRVHQRLDVTVDAILAGKSAPFEIRQIRGEDDVPHKLVTPIPLENLEEEPAPLLNRDFVSELLSDDEDEDFLLIRSNKARSNTYTSPRSSPVHVYTYNVLEADLLQVAEVMGLDDEIEVTDDVGEADVILASSSELKQNSSIRRVAKLHKLPIFVIKSTTMAQMVKAVRMILGRESFGSAPKAIEKSSVDDIEIKDDAPESKPSLEELDALEEVRLAIEYIVIPGGEPVELLPRRSDIIVRQLELVESYQLAVENLGTHLNPRLQILPRRSTKKTLTSSSPQKSADGSMGTTGTRLPFLKD.

The N-terminal 78 residues, 1–78 (MRALNSRLVL…FSFDVRSPSS (78 aa)), are a transit peptide targeting the chloroplast. A disordered region spans residues 33-91 (SDSSSSFRRTRGARQRIASSKSPASSPSPVRRPSDGFSFDVRSPSSDSSISSRKSPTTA). Positions 50 to 88 (ASSKSPASSPSPVRRPSDGFSFDVRSPSSDSSISSRKSP) are enriched in low complexity. 220 to 227 (GSPGVGKT) contacts ATP. Residues 651-684 (PRRSTKKTLTSSSPQKSADGSMGTTGTRLPFLKD) are disordered. The segment covering 657–667 (KTLTSSSPQKS) has biased composition (low complexity).

The protein belongs to the ycf45 family.

The protein localises to the plastid. It localises to the chloroplast membrane. It is found in the chloroplast envelope. Its function is as follows. Required during eoplast (a highly reduced plastid type present during the degreening and dehydration stages of seed maturation) development in embryos and early stages of eoplast redifferentiation during seedling growth. The sequence is that of Protein SEEDLING PLASTID DEVELOPMENT 1 from Arabidopsis thaliana (Mouse-ear cress).